Reading from the N-terminus, the 319-residue chain is tRNA uridine(34) hydroxylase (319 aa).

The 95-residue stretch at Lys-127–Glu-221 folds into the Rhodanese domain. The active-site Cysteine persulfide intermediate is the Cys-181.

It belongs to the TrhO family.

It catalyses the reaction uridine(34) in tRNA + AH2 + O2 = 5-hydroxyuridine(34) in tRNA + A + H2O. Its function is as follows. Catalyzes oxygen-dependent 5-hydroxyuridine (ho5U) modification at position 34 in tRNAs. This Bacillus cereus (strain ZK / E33L) protein is tRNA uridine(34) hydroxylase.